The sequence spans 157 residues: MEEKNKIYLTQETIKKYEEEKWHLINVERPAVILEIKEARQQGDLSENAEYDAAREKQGQIEDRITELENILSNAISIQESHSDKIGLGSVVRILNQSTGKERTFKIVGSFDTDPTQNKISYESPLAKSIIGFSKGDVVEIDAPDKYTTKILSVNDK.

Residues 47 to 75 (ENAEYDAAREKQGQIEDRITELENILSNA) adopt a coiled-coil conformation.

It belongs to the GreA/GreB family.

Its function is as follows. Necessary for efficient RNA polymerase transcription elongation past template-encoded arresting sites. The arresting sites in DNA have the property of trapping a certain fraction of elongating RNA polymerases that pass through, resulting in locked ternary complexes. Cleavage of the nascent transcript by cleavage factors such as GreA or GreB allows the resumption of elongation from the new 3'terminus. GreA releases sequences of 2 to 3 nucleotides. The protein is Transcription elongation factor GreA of Mycoplasmopsis pulmonis (strain UAB CTIP) (Mycoplasma pulmonis).